We begin with the raw amino-acid sequence, 147 residues long: 3-dehydroquinate dehydratase (147 aa).

Catalysis depends on Tyr23, which acts as the Proton acceptor. Residues Asn75, His81, and Asp88 each coordinate substrate. The active-site Proton donor is His101. Residues 102-103 and Arg112 contribute to the substrate site; that span reads LS.

This sequence belongs to the type-II 3-dehydroquinase family. Homododecamer.

It carries out the reaction 3-dehydroquinate = 3-dehydroshikimate + H2O. The protein operates within metabolic intermediate biosynthesis; chorismate biosynthesis; chorismate from D-erythrose 4-phosphate and phosphoenolpyruvate: step 3/7. Catalyzes a trans-dehydration via an enolate intermediate. This chain is 3-dehydroquinate dehydratase, found in Hahella chejuensis (strain KCTC 2396).